Here is a 283-residue protein sequence, read N- to C-terminus: Thymidylate synthase (283 aa).

DUMP is bound at residue R22. Catalysis depends on C160, which acts as the Nucleophile. Residues 180-183 (RSCD), N191, and 221-223 (HIY) contribute to the dUMP site. D183 lines the (6R)-5,10-methylene-5,6,7,8-tetrahydrofolate pocket. S282 lines the (6R)-5,10-methylene-5,6,7,8-tetrahydrofolate pocket.

Belongs to the thymidylate synthase family. Bacterial-type ThyA subfamily. Homodimer.

It is found in the cytoplasm. It carries out the reaction dUMP + (6R)-5,10-methylene-5,6,7,8-tetrahydrofolate = 7,8-dihydrofolate + dTMP. It functions in the pathway pyrimidine metabolism; dTTP biosynthesis. In terms of biological role, catalyzes the reductive methylation of 2'-deoxyuridine-5'-monophosphate (dUMP) to 2'-deoxythymidine-5'-monophosphate (dTMP) while utilizing 5,10-methylenetetrahydrofolate (mTHF) as the methyl donor and reductant in the reaction, yielding dihydrofolate (DHF) as a by-product. This enzymatic reaction provides an intracellular de novo source of dTMP, an essential precursor for DNA biosynthesis. The sequence is that of Thymidylate synthase from Actinobacillus succinogenes (strain ATCC 55618 / DSM 22257 / CCUG 43843 / 130Z).